We begin with the raw amino-acid sequence, 191 residues long: Molybdenum cofactor guanylyltransferase (191 aa).

GTP contacts are provided by residues Leu-13–Gly-15, Lys-26, Asp-72, and Asp-102. Position 102 (Asp-102) interacts with Mg(2+).

Belongs to the MobA family. In terms of assembly, monomer. The cofactor is Mg(2+).

It is found in the cytoplasm. The catalysed reaction is Mo-molybdopterin + GTP + H(+) = Mo-molybdopterin guanine dinucleotide + diphosphate. Transfers a GMP moiety from GTP to Mo-molybdopterin (Mo-MPT) cofactor (Moco or molybdenum cofactor) to form Mo-molybdopterin guanine dinucleotide (Mo-MGD) cofactor. This chain is Molybdenum cofactor guanylyltransferase, found in Pseudomonas putida (strain ATCC 700007 / DSM 6899 / JCM 31910 / BCRC 17059 / LMG 24140 / F1).